Consider the following 476-residue polypeptide: Bifunctional protein GlmU (476 aa).

Positions 1–232 (MGDLAAIILA…PVEVMGVNDR (232 aa)) are pyrophosphorylase. Residues 9-12 (LAAG), Lys-23, Gln-75, and 80-81 (GT) contribute to the UDP-N-acetyl-alpha-D-glucosamine site. Mg(2+) is bound at residue Asp-105. The UDP-N-acetyl-alpha-D-glucosamine site is built by Gly-142, Glu-157, Asn-172, and Asn-230. A Mg(2+)-binding site is contributed by Asn-230. Positions 233-253 (AQLAEAGRFARQRINRELMLD) are linker. Residues 254–476 (GVTIVDPAAT…DGWKLKQRDQ (223 aa)) form an N-acetyltransferase region. UDP-N-acetyl-alpha-D-glucosamine is bound by residues Arg-353 and Lys-371. The Proton acceptor role is filled by His-383. Residues Tyr-386 and Asn-397 each contribute to the UDP-N-acetyl-alpha-D-glucosamine site. Acetyl-CoA-binding positions include 406–407 (NY), Ser-425, Ala-443, and Arg-460.

It in the N-terminal section; belongs to the N-acetylglucosamine-1-phosphate uridyltransferase family. This sequence in the C-terminal section; belongs to the transferase hexapeptide repeat family. Homotrimer. Mg(2+) is required as a cofactor.

Its subcellular location is the cytoplasm. The enzyme catalyses alpha-D-glucosamine 1-phosphate + acetyl-CoA = N-acetyl-alpha-D-glucosamine 1-phosphate + CoA + H(+). The catalysed reaction is N-acetyl-alpha-D-glucosamine 1-phosphate + UTP + H(+) = UDP-N-acetyl-alpha-D-glucosamine + diphosphate. The protein operates within nucleotide-sugar biosynthesis; UDP-N-acetyl-alpha-D-glucosamine biosynthesis; N-acetyl-alpha-D-glucosamine 1-phosphate from alpha-D-glucosamine 6-phosphate (route II): step 2/2. Its pathway is nucleotide-sugar biosynthesis; UDP-N-acetyl-alpha-D-glucosamine biosynthesis; UDP-N-acetyl-alpha-D-glucosamine from N-acetyl-alpha-D-glucosamine 1-phosphate: step 1/1. It participates in bacterial outer membrane biogenesis; LPS lipid A biosynthesis. Its function is as follows. Catalyzes the last two sequential reactions in the de novo biosynthetic pathway for UDP-N-acetylglucosamine (UDP-GlcNAc). The C-terminal domain catalyzes the transfer of acetyl group from acetyl coenzyme A to glucosamine-1-phosphate (GlcN-1-P) to produce N-acetylglucosamine-1-phosphate (GlcNAc-1-P), which is converted into UDP-GlcNAc by the transfer of uridine 5-monophosphate (from uridine 5-triphosphate), a reaction catalyzed by the N-terminal domain. This chain is Bifunctional protein GlmU, found in Geobacter metallireducens (strain ATCC 53774 / DSM 7210 / GS-15).